The primary structure comprises 129 residues: Small ribosomal subunit protein uS11 (129 aa).

This sequence belongs to the universal ribosomal protein uS11 family. In terms of assembly, part of the 30S ribosomal subunit. Interacts with proteins S7 and S18. Binds to IF-3.

Located on the platform of the 30S subunit, it bridges several disparate RNA helices of the 16S rRNA. Forms part of the Shine-Dalgarno cleft in the 70S ribosome. This Limosilactobacillus fermentum (strain NBRC 3956 / LMG 18251) (Lactobacillus fermentum) protein is Small ribosomal subunit protein uS11.